The chain runs to 402 residues: Plasminogen activator inhibitor 1 (402 aa).

The N-terminal stretch at 1 to 23 is a signal peptide; sequence MQMSPALTCLVLGLALVFGEGSA. Residues N232, N288, and N352 are each glycosylated (N-linked (GlcNAc...) asparagine).

It belongs to the serpin family. As to quaternary structure, forms a heterodimer with TMPRSS7. Interacts with VTN. Binds LRP1B; binding is followed by internalization and degradation. Interacts with PPP1CB. In complex with PLAU/uPA, interacts with PLAUR/uPAR. Interacts with SORL1 and LRP1, either alone or in complex with PLAU; these interactions are abolished in the presence of LRPAP1/RAP. The ternary complex composed of PLAUR-PLAU-PAI1 also interacts with SORL1. Interacts with PLAT/tPA. Also interacts with SORL1, when complexed to PLAT/tPA. Inactivated by proteolytic attack of the urokinase-type (u-PA) and the tissue-type (TPA), cleaving the 369-Arg-|-Met-370 bond. In terms of tissue distribution, expressed in endothelial cells. Found in plasma, platelets, and hepatoma and fibrosarcoma cells.

It is found in the secreted. Functionally, serine protease inhibitor. Inhibits TMPRSS7. Is a primary inhibitor of tissue-type plasminogen activator (PLAT) and urokinase-type plasminogen activator (PLAU). As PLAT inhibitor, it is required for fibrinolysis down-regulation and is responsible for the controlled degradation of blood clots. As PLAU inhibitor, it is involved in the regulation of cell adhesion and spreading. Acts as a regulator of cell migration, independently of its role as protease inhibitor. It is required for stimulation of keratinocyte migration during cutaneous injury repair. It is involved in cellular and replicative senescence. Plays a role in alveolar type 2 cells senescence in the lung. Is involved in the regulation of cementogenic differentiation of periodontal ligament stem cells, and regulates odontoblast differentiation and dentin formation during odontogenesis. The sequence is that of Plasminogen activator inhibitor 1 (SERPINE1) from Homo sapiens (Human).